We begin with the raw amino-acid sequence, 238 residues long: Ribonuclease PH (238 aa).

Phosphate-binding positions include Arg86 and 124–126 (GTR).

It belongs to the RNase PH family. As to quaternary structure, homodimer. Has a tendency to aggregate into multimers. Requires Mg(2+) as cofactor.

It carries out the reaction tRNA(n+1) + phosphate = tRNA(n) + a ribonucleoside 5'-diphosphate. Its function is as follows. Phosphorolytic exoribonuclease that plays an important role in tRNA 3'-end maturation; has no activity on a tRNA precursor with a 3'-terminal phosphate group. In vitro is freely reversible, adds nucleotides to the ends of RNA molecules by using nucleoside diphosphates as substrates, but this may not be physiologically important. Probably plays a role in initiation of 16S rRNA degradation (leading to ribosome degradation) during starvation. The protein is Ribonuclease PH of Escherichia coli (strain K12 / MC4100 / BW2952).